Consider the following 965-residue polypeptide: Phosphatidylethanolamine N-methyltransferase (965 aa).

Residues 1 to 55 (MSSSAADPFAARLNSDVRQRHPTASATSKNVEGTSQQKQQQQQQQSEANAAASRV) form a disordered region. The Lumenal portion of the chain corresponds to 1–91 (MSSSAADPFA…DPREPKNLSD (91 aa)). The segment covering 22–35 (PTASATSKNVEGTS) has biased composition (polar residues). Over residues 36–45 (QQKQQQQQQQ) the composition is skewed to low complexity. Residues 92–112 (VAVLAIIALHFLAAYYLPWGV) form a helical membrane-spanning segment. The Cytoplasmic segment spans residues 113–115 (KRP). The helical transmembrane segment at 116 to 136 (LFAAIFMFWRLAYNVGIGYLL) threads the bilayer. Over 137–201 (TIQSKYKLLV…EYNTWLTFRR (65 aa)) the chain is Lumenal. A helical membrane pass occupies residues 202-222 (VVDLILMCDFISYCLFAIVCA). At 223–229 (HKPDGEG) the chain is on the cytoplasmic side. The chain crosses the membrane as a helical span at residues 230-250 (LFMCFARWAAGITLVGFNLWV). The Lumenal segment spans residues 251-279 (KLDAHRVVKDYAWYWGDFFYLIEQELTFD). A helical membrane pass occupies residues 280–300 (GVFELAPHPMYSIGYAGYYGI). The Cytoplasmic portion of the chain corresponds to 301-306 (SMMAAS). A helical transmembrane segment spans residues 307 to 327 (YDVLFISIIAHAAQFAFLVIV). The Lumenal segment spans residues 328–389 (ENPHIEKTYN…IGLKNLDFFR (62 aa)). Residues 390-410 (ITDVAIVLLCAYLAVVTMVTP) traverse the membrane as a helical segment. The Cytoplasmic portion of the chain corresponds to 411-417 (NTRFYQA). A helical membrane pass occupies residues 418 to 438 (LFVLHALAWRLWYSAGLGVIL). The Lumenal portion of the chain corresponds to 439-467 (TMQSEEKMFTRHFLKYGESVGEAWRQWKG). Residues 468–488 (IYHLSNCLCHASFIAASYKMY) form a helical membrane-spanning segment. Residues 489–496 (EFPADWTY) lie on the Cytoplasmic side of the membrane. A helical transmembrane segment spans residues 497 to 517 (GWALLKHVVGLSLIALQVWTA). Residues 518 to 573 (TSIYESLGEFGWFYGDFFFDSKRQLTYTSIYRFLNNPERVFGTAGLWGAALITWSR) lie on the Lumenal side of the membrane. Residues 574–594 (AIFLMALAGHFLTLAFLAYVE) traverse the membrane as a helical segment. Residues 595-965 (KPHMQKVYGR…TTPVDSKFSE (371 aa)) lie on the Cytoplasmic side of the membrane.

This sequence belongs to the class VI-like SAM-binding methyltransferase superfamily. CHO2 family.

It is found in the endoplasmic reticulum membrane. It carries out the reaction a 1,2-diacyl-sn-glycero-3-phosphoethanolamine + S-adenosyl-L-methionine = a 1,2-diacyl-sn-glycero-3-phospho-N-methylethanolamine + S-adenosyl-L-homocysteine + H(+). It participates in phospholipid metabolism; phosphatidylcholine biosynthesis. Its function is as follows. Catalyzes the first step of the methylation pathway of phosphatidylcholine biosynthesis, the SAM-dependent methylation of phosphatidylethanolamine (PE) to phosphatidylmonomethylethanolamine (PMME). In Neurospora crassa (strain ATCC 24698 / 74-OR23-1A / CBS 708.71 / DSM 1257 / FGSC 987), this protein is Phosphatidylethanolamine N-methyltransferase.